Reading from the N-terminus, the 461-residue chain is Bifunctional protein GlmU (461 aa).

The tract at residues 1 to 229 (MLKKEINVVI…CKEILGVNNK (229 aa)) is pyrophosphorylase. UDP-N-acetyl-alpha-D-glucosamine contacts are provided by residues 11–14 (LAAG), Lys25, Gln76, 81–82 (GT), 103–105 (YGD), Gly140, Glu154, and Asn227. Asp105 is a binding site for Mg(2+). Residue Asn227 coordinates Mg(2+). Positions 230–250 (LQLSILEKIFRKKQVNDLLLS) are linker. Residues 251–461 (GVTLKDPNHF…PQKIIKKTDQ (211 aa)) form an N-acetyltransferase region. Residues Arg333 and Lys351 each contribute to the UDP-N-acetyl-alpha-D-glucosamine site. His363 functions as the Proton acceptor in the catalytic mechanism. Residues Tyr366 and Asn377 each coordinate UDP-N-acetyl-alpha-D-glucosamine. Acetyl-CoA-binding positions include Ala380, 386-387 (NY), and Ala423.

The protein in the N-terminal section; belongs to the N-acetylglucosamine-1-phosphate uridyltransferase family. It in the C-terminal section; belongs to the transferase hexapeptide repeat family. In terms of assembly, homotrimer. Mg(2+) is required as a cofactor.

Its subcellular location is the cytoplasm. The enzyme catalyses alpha-D-glucosamine 1-phosphate + acetyl-CoA = N-acetyl-alpha-D-glucosamine 1-phosphate + CoA + H(+). It carries out the reaction N-acetyl-alpha-D-glucosamine 1-phosphate + UTP + H(+) = UDP-N-acetyl-alpha-D-glucosamine + diphosphate. Its pathway is nucleotide-sugar biosynthesis; UDP-N-acetyl-alpha-D-glucosamine biosynthesis; N-acetyl-alpha-D-glucosamine 1-phosphate from alpha-D-glucosamine 6-phosphate (route II): step 2/2. It functions in the pathway nucleotide-sugar biosynthesis; UDP-N-acetyl-alpha-D-glucosamine biosynthesis; UDP-N-acetyl-alpha-D-glucosamine from N-acetyl-alpha-D-glucosamine 1-phosphate: step 1/1. The protein operates within bacterial outer membrane biogenesis; LPS lipid A biosynthesis. Its function is as follows. Catalyzes the last two sequential reactions in the de novo biosynthetic pathway for UDP-N-acetylglucosamine (UDP-GlcNAc). The C-terminal domain catalyzes the transfer of acetyl group from acetyl coenzyme A to glucosamine-1-phosphate (GlcN-1-P) to produce N-acetylglucosamine-1-phosphate (GlcNAc-1-P), which is converted into UDP-GlcNAc by the transfer of uridine 5-monophosphate (from uridine 5-triphosphate), a reaction catalyzed by the N-terminal domain. The polypeptide is Bifunctional protein GlmU (Buchnera aphidicola subsp. Schizaphis graminum (strain Sg)).